Here is a 372-residue protein sequence, read N- to C-terminus: 3 beta-hydroxysteroid dehydrogenase/Delta 5--&gt;4-isomerase type 2 (372 aa).

Tyrosine 154 functions as the Proton acceptor in the catalytic mechanism. Lysine 158 serves as a coordination point for NAD(+). Residues 287-307 (LTLMYWIGFLLEVVSFLLSPI) form a helical membrane-spanning segment.

The protein belongs to the 3-beta-HSD family. In terms of tissue distribution, expressed in adrenal gland, testis and ovary.

It localises to the endoplasmic reticulum membrane. Its subcellular location is the mitochondrion membrane. It catalyses the reaction a 3beta-hydroxy-Delta(5)-steroid + NAD(+) = a 3-oxo-Delta(5)-steroid + NADH + H(+). It carries out the reaction a 3-oxo-Delta(5)-steroid = a 3-oxo-Delta(4)-steroid. The enzyme catalyses pregnenolone + NAD(+) = pregn-5-ene-3,20-dione + NADH + H(+). The catalysed reaction is pregn-5-ene-3,20-dione = progesterone. It catalyses the reaction 3beta-hydroxyandrost-5-en-17-one + NAD(+) = androst-5-ene-3,17-dione + NADH + H(+). It carries out the reaction androst-5-ene-3,17-dione = androst-4-ene-3,17-dione. Its pathway is lipid metabolism; steroid biosynthesis. Functionally, 3-beta-HSD is a bifunctional enzyme, that catalyzes the oxidative conversion of Delta(5)-ene-3-beta-hydroxy steroid, and the oxidative conversion of ketosteroids. The 3-beta-HSD enzymatic system plays a crucial role in the biosynthesis of all classes of hormonal steroids. The chain is 3 beta-hydroxysteroid dehydrogenase/Delta 5--&gt;4-isomerase type 2 from Homo sapiens (Human).